The following is a 638-amino-acid chain: Threonine--tRNA ligase (638 aa).

Positions Met1–Thr61 constitute a TGS domain. Residues Asp242–Pro533 form a catalytic region. Zn(2+) is bound by residues Cys333, His384, and His510.

Belongs to the class-II aminoacyl-tRNA synthetase family. In terms of assembly, homodimer. Requires Zn(2+) as cofactor.

It is found in the cytoplasm. It carries out the reaction tRNA(Thr) + L-threonine + ATP = L-threonyl-tRNA(Thr) + AMP + diphosphate + H(+). Catalyzes the attachment of threonine to tRNA(Thr) in a two-step reaction: L-threonine is first activated by ATP to form Thr-AMP and then transferred to the acceptor end of tRNA(Thr). Also edits incorrectly charged L-seryl-tRNA(Thr). The chain is Threonine--tRNA ligase from Prochlorococcus marinus (strain AS9601).